The primary structure comprises 62 residues: Alpha-elapitoxin-Nn2a (62 aa).

A disordered region spans residues 1–20 (LECHNQQSSQTPTTTDCSGG). Cystine bridges form between Cys-3/Cys-24, Cys-17/Cys-41, Cys-43/Cys-54, and Cys-55/Cys-60.

It belongs to the three-finger toxin family. Short-chain subfamily. Type I alpha-neurotoxin sub-subfamily. In terms of tissue distribution, expressed by the venom gland.

It localises to the secreted. Its function is as follows. Nicotinic acetylcholine receptor antagonist. Binds to muscle nicotinic acetylcholine receptor (nAChR) and inhibits acetylcholine from binding to the receptor, thereby impairing neuromuscular transmission. Produces peripheral paralysis by blocking neuromuscular transmission at the postsynaptic site. Induces concentration-dependent inhibition of indirect twitches and abolishes contractile responses of tissues to exogenous acetylcholine and carbachol, in the chick biventer cervicis nerve-muscle preparation at 100-300 nM (in vitro). Prior incubation of tissues with Indian polyvalent antivenom (1 ml/0.6 mg) prevents the neurotoxic effects at 100 nM (in vitro). Addition of Indian polyvalent antivenom (1 ml/0.6 mg) at the t90 time point does not reverse the neurotoxic effects (in vitro). Displays non-competitive antagonism of concentration-response curves to carbachol, with a pA2 of 8.01 (in vitro). This Naja naja (Indian cobra) protein is Alpha-elapitoxin-Nn2a.